The sequence spans 432 residues: Adenylosuccinate synthetase (432 aa).

GTP contacts are provided by residues 13–19 (GDEGKGK) and 41–43 (GHT). D14 serves as the catalytic Proton acceptor. Mg(2+)-binding residues include D14 and G41. Residues 14-17 (DEGK), 39-42 (NAGH), T130, R144, Q225, T240, and R304 each bind IMP. H42 acts as the Proton donor in catalysis. 300–306 (ATTGRRR) provides a ligand contact to substrate. Residues R306, 332–334 (KLD), and 415–417 (STG) contribute to the GTP site.

Belongs to the adenylosuccinate synthetase family. As to quaternary structure, homodimer. It depends on Mg(2+) as a cofactor.

Its subcellular location is the cytoplasm. It catalyses the reaction IMP + L-aspartate + GTP = N(6)-(1,2-dicarboxyethyl)-AMP + GDP + phosphate + 2 H(+). The protein operates within purine metabolism; AMP biosynthesis via de novo pathway; AMP from IMP: step 1/2. Its function is as follows. Plays an important role in the de novo pathway of purine nucleotide biosynthesis. Catalyzes the first committed step in the biosynthesis of AMP from IMP. The sequence is that of Adenylosuccinate synthetase from Salmonella paratyphi A (strain AKU_12601).